The following is a 334-amino-acid chain: Holliday junction branch migration complex subunit RuvB (334 aa).

A large ATPase domain (RuvB-L) region spans residues methionine 1–tyrosine 182. Residues leucine 21, arginine 22, glycine 63, lysine 66, threonine 67, threonine 68, glutamate 129–phenylalanine 131, arginine 172, tyrosine 182, and arginine 219 contribute to the ATP site. Threonine 67 serves as a coordination point for Mg(2+). The small ATPAse domain (RuvB-S) stretch occupies residues threonine 183–glutamine 253. A head domain (RuvB-H) region spans residues alanine 256–aspartate 334. Positions 311 and 316 each coordinate DNA.

This sequence belongs to the RuvB family. Homohexamer. Forms an RuvA(8)-RuvB(12)-Holliday junction (HJ) complex. HJ DNA is sandwiched between 2 RuvA tetramers; dsDNA enters through RuvA and exits via RuvB. An RuvB hexamer assembles on each DNA strand where it exits the tetramer. Each RuvB hexamer is contacted by two RuvA subunits (via domain III) on 2 adjacent RuvB subunits; this complex drives branch migration. In the full resolvosome a probable DNA-RuvA(4)-RuvB(12)-RuvC(2) complex forms which resolves the HJ.

The protein localises to the cytoplasm. The enzyme catalyses ATP + H2O = ADP + phosphate + H(+). Functionally, the RuvA-RuvB-RuvC complex processes Holliday junction (HJ) DNA during genetic recombination and DNA repair, while the RuvA-RuvB complex plays an important role in the rescue of blocked DNA replication forks via replication fork reversal (RFR). RuvA specifically binds to HJ cruciform DNA, conferring on it an open structure. The RuvB hexamer acts as an ATP-dependent pump, pulling dsDNA into and through the RuvAB complex. RuvB forms 2 homohexamers on either side of HJ DNA bound by 1 or 2 RuvA tetramers; 4 subunits per hexamer contact DNA at a time. Coordinated motions by a converter formed by DNA-disengaged RuvB subunits stimulates ATP hydrolysis and nucleotide exchange. Immobilization of the converter enables RuvB to convert the ATP-contained energy into a lever motion, pulling 2 nucleotides of DNA out of the RuvA tetramer per ATP hydrolyzed, thus driving DNA branch migration. The RuvB motors rotate together with the DNA substrate, which together with the progressing nucleotide cycle form the mechanistic basis for DNA recombination by continuous HJ branch migration. Branch migration allows RuvC to scan DNA until it finds its consensus sequence, where it cleaves and resolves cruciform DNA. The chain is Holliday junction branch migration complex subunit RuvB from Bacillus velezensis (strain DSM 23117 / BGSC 10A6 / LMG 26770 / FZB42) (Bacillus amyloliquefaciens subsp. plantarum).